We begin with the raw amino-acid sequence, 202 residues long: Snake venom metalloproteinase atroxlysin-1 (202 aa).

Positions 6–202 (RYVDLFIVVD…ENPQCILNKR (197 aa)) constitute a Peptidase M12B domain. The Ca(2+) site is built by Asp9 and Asp93. Cystine bridges form between Cys117-Cys197, Cys157-Cys181, and Cys159-Cys164. His142 provides a ligand contact to Zn(2+). The active site involves Glu143. Positions 146 and 152 each coordinate Zn(2+). The Ca(2+) site is built by Cys197 and Asn200.

It belongs to the venom metalloproteinase (M12B) family. P-I subfamily. As to quaternary structure, monomer. Zn(2+) is required as a cofactor. In terms of tissue distribution, expressed by the venom gland.

Its subcellular location is the secreted. Its activity is regulated as follows. Inhibited by EDTA, DTT and high concentrations of zinc ions (&gt;2 mM). Weakly inhibited by TLCK. Not inhibited by PMSF. Activated by calcium ions. In terms of biological role, snake venom zinc metalloproteinase that acts on fibrinogen, fibrin, fibronectin (FN1), type I collagen, type IV collagen, integrin alpha-7/beta-1 (ITGA7/ITGB1) and integrin alpha-1/beta-1 (ITGA1/ITGB1). Binds to fibronectin (FN1), fibrinogen and, weakly, to type I collagen and laminin. Cleaves Xaa-Leu bonds. Inhibits ADP- and collagen-induced platelet aggregation both in the presence (IC(50)=1.4 uM for collagen) and in the absence (IC(50)=2.2 uM for collagen) of cofactors. Has hemorrhagic activity. The polypeptide is Snake venom metalloproteinase atroxlysin-1 (Bothrops atrox (Barba amarilla)).